Consider the following 221-residue polypeptide: Octanoyltransferase (221 aa).

Positions 38–220 constitute a BPL/LPL catalytic domain; the sequence is GEIPDTLLLL…GFREVLGDPG (183 aa). Substrate is bound by residues 84–91, 149–151, and 163–165; these read RGGDATFH, AIG, and GFA. Cys181 functions as the Acyl-thioester intermediate in the catalytic mechanism.

This sequence belongs to the LipB family.

It is found in the cytoplasm. The catalysed reaction is octanoyl-[ACP] + L-lysyl-[protein] = N(6)-octanoyl-L-lysyl-[protein] + holo-[ACP] + H(+). It functions in the pathway protein modification; protein lipoylation via endogenous pathway; protein N(6)-(lipoyl)lysine from octanoyl-[acyl-carrier-protein]: step 1/2. Catalyzes the transfer of endogenously produced octanoic acid from octanoyl-acyl-carrier-protein onto the lipoyl domains of lipoate-dependent enzymes. Lipoyl-ACP can also act as a substrate although octanoyl-ACP is likely to be the physiological substrate. This chain is Octanoyltransferase, found in Rubrobacter xylanophilus (strain DSM 9941 / JCM 11954 / NBRC 16129 / PRD-1).